The primary structure comprises 400 residues: Imidazolonepropionase (400 aa).

The Fe(3+) site is built by His70 and His72. 2 residues coordinate Zn(2+): His70 and His72. Positions 79, 142, and 175 each coordinate 4-imidazolone-5-propanoate. Tyr142 contributes to the N-formimidoyl-L-glutamate binding site. Position 239 (His239) interacts with Fe(3+). His239 lines the Zn(2+) pocket. Gln242 lines the 4-imidazolone-5-propanoate pocket. Asp314 contributes to the Fe(3+) binding site. Asp314 is a binding site for Zn(2+). N-formimidoyl-L-glutamate contacts are provided by Asn316 and Gly318. Residue Thr319 participates in 4-imidazolone-5-propanoate binding.

It belongs to the metallo-dependent hydrolases superfamily. HutI family. Zn(2+) is required as a cofactor. The cofactor is Fe(3+).

It localises to the cytoplasm. The catalysed reaction is 4-imidazolone-5-propanoate + H2O = N-formimidoyl-L-glutamate. Its pathway is amino-acid degradation; L-histidine degradation into L-glutamate; N-formimidoyl-L-glutamate from L-histidine: step 3/3. In terms of biological role, catalyzes the hydrolytic cleavage of the carbon-nitrogen bond in imidazolone-5-propanoate to yield N-formimidoyl-L-glutamate. It is the third step in the universal histidine degradation pathway. In Methylobacterium nodulans (strain LMG 21967 / CNCM I-2342 / ORS 2060), this protein is Imidazolonepropionase.